A 359-amino-acid chain; its full sequence is Phosphate acyltransferase (359 aa).

The protein belongs to the PlsX family. In terms of assembly, homodimer. Probably interacts with PlsY.

It is found in the cytoplasm. The catalysed reaction is a fatty acyl-[ACP] + phosphate = an acyl phosphate + holo-[ACP]. The protein operates within lipid metabolism; phospholipid metabolism. Catalyzes the reversible formation of acyl-phosphate (acyl-PO(4)) from acyl-[acyl-carrier-protein] (acyl-ACP). This enzyme utilizes acyl-ACP as fatty acyl donor, but not acyl-CoA. The sequence is that of Phosphate acyltransferase from Citrobacter koseri (strain ATCC BAA-895 / CDC 4225-83 / SGSC4696).